We begin with the raw amino-acid sequence, 136 residues long: Histone H3.3 (136 aa).

Positions 1–42 (MARTKQTARKSTGGKAPRKQLASKAARKSAPVSGGVKKPHRY) are disordered. K5 is subject to N6,N6,N6-trimethyllysine; alternate. An N6,N6-dimethyllysine; alternate modification is found at K5. Residues K5 and K10 each carry the N6-methyllysine; alternate modification. K10 is subject to N6-acetyllysine; alternate. Residue S11 is modified to Phosphoserine. K15 is modified (N6,N6-dimethyllysine; alternate). K15, K19, K24, K28, and K37 each carry N6-acetyllysine; alternate. N6-methyllysine; alternate is present on residues K19, K24, K28, and K37. N6,N6,N6-trimethyllysine; alternate occurs at positions 28 and 37. N6,N6-dimethyllysine; alternate is present on residues K28 and K37. N6-acetyllysine occurs at positions 57 and 65. At K80 the chain carries N6,N6,N6-trimethyllysine; alternate. K80 bears the N6,N6-dimethyllysine; alternate mark. Residue K80 is modified to N6-methyllysine; alternate.

The protein belongs to the histone H3 family. As to quaternary structure, the nucleosome is a histone octamer containing two molecules each of H2A, H2B, H3 and H4 assembled in one H3-H4 heterotetramer and two H2A-H2B heterodimers. The octamer wraps approximately 147 bp of DNA. Post-translationally, phosphorylated by IPL1 to form H3S10ph. H3S10ph promotes subsequent H3K14ac formation by GCN5 and is required for transcriptional activation through TBP recruitment to the promoters. In terms of processing, mono-, di- and trimethylated by the COMPASS complex to form H3K4me1/2/3. H3K4me activates gene expression by regulating transcription elongation and plays a role in telomere length maintenance. H3K4me enrichment correlates with transcription levels, and occurs in a 5' to 3' gradient with H3K4me3 enrichment at the 5'-end of genes, shifting to H3K4me2 and then H3K4me1. Methylated by SET2 to form H3K36me. H3K36me represses gene expression. Methylated by DOT1 to form H3K79me. H3K79me is required for association of SIR proteins with telomeric regions and for telomeric silencing. The COMPASS-mediated formation of H3K4me2/3 and the DOT1-mediated formation of H3K79me require H2BK123ub1. Acetylation of histone H3 leads to transcriptional activation. H3K14ac formation by GCN5 is promoted by H3S10ph. H3K14ac can also be formed by ESA1. H3K56ac formation occurs predominantly in newly synthesized H3 molecules during G1, S and G2/M of the cell cycle and may be involved in DNA repair.

The protein localises to the nucleus. Its subcellular location is the chromosome. In terms of biological role, core component of nucleosome. Nucleosomes wrap and compact DNA into chromatin, limiting DNA accessibility to the cellular machineries which require DNA as a template. Histones thereby play a central role in transcription regulation, DNA repair, DNA replication and chromosomal stability. DNA accessibility is regulated via a complex set of post-translational modifications of histones, also called histone code, and nucleosome remodeling. The sequence is that of Histone H3.3 (HHT3) from Debaryomyces hansenii (strain ATCC 36239 / CBS 767 / BCRC 21394 / JCM 1990 / NBRC 0083 / IGC 2968) (Yeast).